Reading from the N-terminus, the 203-residue chain is MEKFTVLTGVAAPLRIMNVDTDMIIPARYLKTIKRTGLGAGLFSSLRFDDTGAERPDFVLNQRAYRNATILIAGDNFGCGSSREHAPWALLDYGIRCVIAPSFADIFFNNCFKNGILPIALPEPVVEKLMAAADNGANATFTVDLEAQRIAMPDGESIPFEVEPFRRECLLNGWDDIGLTLRQSERIDAYEARQRTEQPWALG.

This sequence belongs to the LeuD family. LeuD type 1 subfamily. Heterodimer of LeuC and LeuD.

The catalysed reaction is (2R,3S)-3-isopropylmalate = (2S)-2-isopropylmalate. Its pathway is amino-acid biosynthesis; L-leucine biosynthesis; L-leucine from 3-methyl-2-oxobutanoate: step 2/4. In terms of biological role, catalyzes the isomerization between 2-isopropylmalate and 3-isopropylmalate, via the formation of 2-isopropylmaleate. In Rhodospirillum centenum (strain ATCC 51521 / SW), this protein is 3-isopropylmalate dehydratase small subunit.